A 78-amino-acid chain; its full sequence is MTKFSLLDHEAVPKHEIMSEGELKSVLSKYFIEKEQLPKIKVQDPVCKEIGAVVGDVVKITRKSQTAGEADYYRLVIE.

It belongs to the archaeal Rpo5/eukaryotic RPB5 RNA polymerase subunit family. Part of the RNA polymerase complex.

It localises to the cytoplasm. The enzyme catalyses RNA(n) + a ribonucleoside 5'-triphosphate = RNA(n+1) + diphosphate. In terms of biological role, DNA-dependent RNA polymerase (RNAP) catalyzes the transcription of DNA into RNA using the four ribonucleoside triphosphates as substrates. In Methanosarcina mazei (strain ATCC BAA-159 / DSM 3647 / Goe1 / Go1 / JCM 11833 / OCM 88) (Methanosarcina frisia), this protein is DNA-directed RNA polymerase subunit Rpo5.